A 357-amino-acid chain; its full sequence is MAAPAKGENLSLVVHGPGDIRLENYPIPELGPNDVLLKMHSVGICGSDVHYWEHGRIGDFVVKKPMVLGHEAAGTVTKVGELVKHLKPGDRVAIEPGVPREVDEYCKIGRYNLTPTIFFCATPPDDGNLCRFYKHNADFCYKLPDSVTFEEGALIEPLSVGIYACRRGSVSLGNKVLVCGAGPVGMVTLLVAKAMGAAQVVVTDLSASRLTKAKEVGADFTIQVGKETPQEIASKVESLLGSKPEVTIECTGAESSVQTGIYATHSGGTLVIVGMGAEMVNLPLVHAAIREVDIKGVFRYCNTWPMAISMLASKTLNVKPLVTHRFPLEKAVEAFETAKKGVGLKVMIKCDPNDQNP.

Position 2 is an N-acetylalanine (alanine 2). Cysteine 45 is a binding site for Zn(2+). Tyrosine 51 provides a ligand contact to substrate. Zn(2+)-binding residues include histidine 70 and glutamate 71. Glutamate 156 is a binding site for substrate. Serine 169 bears the Phosphoserine mark. NAD(+) contacts are provided by residues valine 184, aspartate 204, arginine 209, 273–275 (VGM), and 297–299 (VFR). Substrate-binding residues include arginine 299 and tyrosine 300.

It belongs to the zinc-containing alcohol dehydrogenase family. As to quaternary structure, homotetramer. It depends on Zn(2+) as a cofactor. In terms of tissue distribution, testis has the highest level of expression, followed by kidney, liver, and lung. Low levels of expression are also observed in lens, brain, and skeletal muscle. Expressed in sperm flagellum and very low expression in the sperm head.

The protein localises to the mitochondrion membrane. It is found in the cell projection. It localises to the cilium. Its subcellular location is the flagellum. The catalysed reaction is keto-D-fructose + NADH + H(+) = D-sorbitol + NAD(+). It catalyses the reaction xylitol + NAD(+) = D-xylulose + NADH + H(+). It carries out the reaction L-iditol + NAD(+) = keto-L-sorbose + NADH + H(+). With respect to regulation, inhibited in vitro by p-hydroxymercuribenzoate, EDTA, l,l0-phenanthroline and N-ethylmaleimide. Functionally, polyol dehydrogenase that catalyzes the reversible NAD(+)-dependent oxidation of various sugar alcohols. Is active with D-sorbitol (D-glucitol) leading to the C2-oxidized product D-fructose. Is a key enzyme in the polyol pathway that interconverts glucose and fructose via sorbitol, which constitutes an important alternate route for glucose metabolism. May play a role in sperm motility by using sorbitol as an alternative energy source for sperm motility and protein tyrosine phosphorylation. Has no activity on ethanol. Cannot use NADP(+) as the electron acceptor. The chain is Sorbitol dehydrogenase (Sord) from Mus musculus (Mouse).